The chain runs to 116 residues: Large ribosomal subunit protein bL19 (116 aa).

Belongs to the bacterial ribosomal protein bL19 family.

Functionally, this protein is located at the 30S-50S ribosomal subunit interface and may play a role in the structure and function of the aminoacyl-tRNA binding site. In Stutzerimonas stutzeri (strain A1501) (Pseudomonas stutzeri), this protein is Large ribosomal subunit protein bL19.